A 26-amino-acid chain; its full sequence is Phospholipase A2 homolog A1 (26 aa).

Post-translationally, contains 7 disulfide bonds. In terms of tissue distribution, expressed by the venom gland.

It is found in the secreted. The protein is Phospholipase A2 homolog A1 of Micrurus pyrrhocryptus (Coral snake).